The sequence spans 346 residues: MNCREIIRKLLLNPAHNNAATRTAQGDNGDSNQRAYTRISRLAAFQSAQTQESTPKTNGTGRATTEGLTEAEVRWLVMESRALFMSQPMLVEIAAPVRICGDVHGQYTDLLRLFDLGGFPPDANYIFLGDYVDRGDQSLETICLLLAYKLSFPETFFLLRGNHECSSINRIYGFFDECKRRYSVRLWKQFTDTFNCMPVAGLVEGRILCMHGGLSPELTDLDQIRRILRPTDVPDSGLICDLLWSDPSTNMESNWSENDRGVSWTFSESVVKSFNKKFDLDLICRAHQVVDAGYEFFAARQLVTVFSAPNYCDEFDNAGAFMCVDENLMCSFVQIEPTRTLLRYFF.

Residues aspartate 102, histidine 104, aspartate 130, and asparagine 162 each contribute to the Mn(2+) site. Catalysis depends on histidine 163, which acts as the Proton donor. Residues histidine 211 and histidine 287 each coordinate Mn(2+).

It belongs to the PPP phosphatase family. PP-1 subfamily. Mn(2+) serves as cofactor.

It carries out the reaction O-phospho-L-seryl-[protein] + H2O = L-seryl-[protein] + phosphate. The catalysed reaction is O-phospho-L-threonyl-[protein] + H2O = L-threonyl-[protein] + phosphate. This Trypanosoma brucei brucei protein is Serine/threonine-protein phosphatase PP1(5.9).